Here is a 96-residue protein sequence, read N- to C-terminus: Small ribosomal subunit protein bS21 (96 aa).

Positions 37–52 (EKPSEKKAREKAEAVR) are enriched in basic and acidic residues. The segment at 37-96 (EKPSEKKAREKAEAVRRARKLARKKLQREGLLPSKPKPVFGADRGRGAAGGAGGAPRPAR) is disordered. Residues 53 to 62 (RARKLARKKL) are compositionally biased toward basic residues.

This sequence belongs to the bacterial ribosomal protein bS21 family.

This Afipia carboxidovorans (strain ATCC 49405 / DSM 1227 / KCTC 32145 / OM5) (Oligotropha carboxidovorans) protein is Small ribosomal subunit protein bS21.